A 212-amino-acid polypeptide reads, in one-letter code: dTTP/UTP pyrophosphatase (212 aa).

The Proton acceptor role is filled by aspartate 88.

The protein belongs to the Maf family. YhdE subfamily. It depends on a divalent metal cation as a cofactor.

It localises to the cytoplasm. It carries out the reaction dTTP + H2O = dTMP + diphosphate + H(+). It catalyses the reaction UTP + H2O = UMP + diphosphate + H(+). Functionally, nucleoside triphosphate pyrophosphatase that hydrolyzes dTTP and UTP. May have a dual role in cell division arrest and in preventing the incorporation of modified nucleotides into cellular nucleic acids. The chain is dTTP/UTP pyrophosphatase from Colwellia psychrerythraea (strain 34H / ATCC BAA-681) (Vibrio psychroerythus).